The chain runs to 284 residues: Riboflavin transporter (284 aa).

EamA domains follow at residues 2–129 (VAAC…LIII) and 141–273 (LLPI…SLYL). 8 helical membrane passes run 26–46 (SVII…PLLV), 58–78 (FGLH…WIYA), 82–102 (VPIW…ILCA), 115–135 (LLTT…WSDS), 136–156 (YTVY…YSVM), 167–187 (ASIS…LWLA), 195–215 (ITAP…FTAL), and 247–267 (GWIV…ALII).

This sequence belongs to the drug/metabolite transporter (DMT) superfamily. 10 TMS drug/metabolite exporter (DME) (TC 2.A.7.3) family.

Its subcellular location is the cell membrane. In terms of biological role, transports riboflavin into the cell. The sequence is that of Riboflavin transporter from Brucella anthropi (strain ATCC 49188 / DSM 6882 / CCUG 24695 / JCM 21032 / LMG 3331 / NBRC 15819 / NCTC 12168 / Alc 37) (Ochrobactrum anthropi).